The primary structure comprises 326 residues: Ribose-phosphate pyrophosphokinase 4 (326 aa).

4 residues coordinate Mg(2+): Asp140, His142, His151, and Asp155.

It belongs to the ribose-phosphate pyrophosphokinase family.

The protein localises to the cytoplasm. It catalyses the reaction D-ribose 5-phosphate + ATP = 5-phospho-alpha-D-ribose 1-diphosphate + AMP + H(+). It functions in the pathway metabolic intermediate biosynthesis; 5-phospho-alpha-D-ribose 1-diphosphate biosynthesis; 5-phospho-alpha-D-ribose 1-diphosphate from D-ribose 5-phosphate (route I): step 1/1. Functionally, 5-phosphoribose 1-diphosphate synthase involved in nucleotide, histidine, and tryptophan biosynthesis. Active in heteromultimeric complexes with other 5-phosphoribose 1-diphosphate synthases (PRS2, PRS3, PRS4 and PRS5). In Saccharomyces cerevisiae (strain ATCC 204508 / S288c) (Baker's yeast), this protein is Ribose-phosphate pyrophosphokinase 4 (PRS4).